We begin with the raw amino-acid sequence, 87 residues long: Small ribosomal subunit protein bS20 (87 aa).

It belongs to the bacterial ribosomal protein bS20 family.

Binds directly to 16S ribosomal RNA. The protein is Small ribosomal subunit protein bS20 of Parvibaculum lavamentivorans (strain DS-1 / DSM 13023 / NCIMB 13966).